The sequence spans 686 residues: Zinc finger protein 7 (686 aa).

The KRAB domain maps to 4–76 (VTFGDVAVHF…DLQGAEGTEA (73 aa)). Glycyl lysine isopeptide (Lys-Gly) (interchain with G-Cter in SUMO2) cross-links involve residues K81 and K101. Phosphoserine is present on residues S126 and S138. 6 consecutive C2H2-type zinc fingers follow at residues 223 to 245 (SRCQ…NNCH), 250 to 272 (YECA…QRIH), 278 to 300 (FKCT…QRIH), 306 to 328 (YRCE…QRIH), 334 to 356 (YGCR…QRTH), and 362 to 384 (YPCK…QRMH). Residues K279 and K292 each participate in a glycyl lysine isopeptide (Lys-Gly) (interchain with G-Cter in SUMO2) cross-link. A Glycyl lysine isopeptide (Lys-Gly) (interchain with G-Cter in SUMO2) cross-link involves residue K393. C2H2-type zinc fingers lie at residues 413–435 (FKCD…QLIH), 441–463 (YKCN…QRTH), 469–491 (FKCD…QRIH), 497–519 (YVCN…QRIH), 525–547 (YECL…QRVH), 553–575 (YKCN…QIIH), 581–603 (YECS…QRIH), 634–656 (HQCE…QRIH), and 662–684 (YKCN…QKIH).

Belongs to the krueppel C2H2-type zinc-finger protein family.

The protein resides in the nucleus. May be involved in transcriptional regulation. The protein is Zinc finger protein 7 (ZNF7) of Pongo abelii (Sumatran orangutan).